The primary structure comprises 411 residues: Probable UDP-arabinose 4-epimerase 3 (411 aa).

Residues methionine 1–asparagine 13 are compositionally biased toward polar residues. The disordered stretch occupies residues methionine 1–glutamate 22. Over methionine 1–asparagine 31 the chain is Cytoplasmic. Residues valine 32–leucine 50 form a helical; Signal-anchor for type II membrane protein membrane-spanning segment. Residues lysine 51–serine 411 are Lumenal-facing. An NAD(+)-binding site is contributed by histidine 71–leucine 102. The active-site Proton acceptor is the tyrosine 219.

Belongs to the NAD(P)-dependent epimerase/dehydratase family. NAD(+) is required as a cofactor.

It is found in the golgi apparatus. The protein resides in the golgi stack membrane. The enzyme catalyses UDP-beta-L-arabinopyranose = UDP-alpha-D-xylose. The protein operates within nucleotide-sugar biosynthesis; UDP-L-arabinose biosynthesis; UDP-L-arabinose from UDP-alpha-D-xylose: step 1/1. It functions in the pathway cell wall biogenesis; cell wall polysaccharide biosynthesis. The sequence is that of Probable UDP-arabinose 4-epimerase 3 from Arabidopsis thaliana (Mouse-ear cress).